The following is a 276-amino-acid chain: MESTIGIDAGGTLTKIAYLNEKKKLTFEKFYSNEQDKIIDWLKKQISIKQICITGGKAKQLQQLLSDSYKIVELNEFEATLVGVRYILKEEKYDINNFVLTNIGTGTSIHYIYNDRYIRAGGTGVGGGTIMGLSKLLTNIDHFEDVIPLTKVGSRKDLDITVGDIYGGILSPIDNSLTASNFGKAATIESNYNNSDILATVQGLVGEVVTALSLQFAETKNIDHIIYIGSTLCNNIHLQNIISSYTKYQNKTPIFLRDGGNSGAIGALLHATNKKS.

Asp-8–Lys-15 contacts ATP. Glu-76 acts as the Proton acceptor in catalysis. ATP-binding positions include Thr-105, Gly-127–Met-131, Phe-143, and Ser-230.

This sequence belongs to the type II pantothenate kinase family. In terms of assembly, homodimer.

The protein localises to the cytoplasm. It catalyses the reaction (R)-pantothenate + ATP = (R)-4'-phosphopantothenate + ADP + H(+). Its pathway is cofactor biosynthesis; coenzyme A biosynthesis; CoA from (R)-pantothenate: step 1/5. Functionally, catalyzes the phosphorylation of pantothenate (Pan), the first step in CoA biosynthesis. This is Type II pantothenate kinase from Bacillus thuringiensis subsp. konkukian (strain 97-27).